We begin with the raw amino-acid sequence, 180 residues long: Ribosome maturation factor RimM (180 aa).

The region spanning 97 to 176 (EGEFFYCDLI…KITTNNAKTL (80 aa)) is the PRC barrel domain.

Belongs to the RimM family. Binds ribosomal protein uS19.

It is found in the cytoplasm. An accessory protein needed during the final step in the assembly of 30S ribosomal subunit, possibly for assembly of the head region. Essential for efficient processing of 16S rRNA. May be needed both before and after RbfA during the maturation of 16S rRNA. It has affinity for free ribosomal 30S subunits but not for 70S ribosomes. This chain is Ribosome maturation factor RimM, found in Helicobacter acinonychis (strain Sheeba).